The sequence spans 822 residues: General transcription factor 3C polypeptide 4 (822 aa).

At methionine 1 the chain carries N-acetylmethionine. Residues 1-41 (MNTADQARVGPADDGPAPSGEEEGEGGGEAGGKEPAADAAP) are disordered. Serine 19 is modified (phosphoserine). Lysine 225 is covalently cross-linked (Glycyl lysine isopeptide (Lys-Gly) (interchain with G-Cter in SUMO2)). Phosphoserine is present on residues serine 604 and serine 611. A disordered region spans residues 608–663 (LVDSPGMGNADDEQQEEGTSSKQVVKQGLQERSKEGDVEEPTDDSLPTTGDAGGRE). Lysine 629 participates in a covalent cross-link: Glycyl lysine isopeptide (Lys-Gly) (interchain with G-Cter in SUMO2). Residue serine 652 is modified to Phosphoserine.

The protein belongs to the TFIIIC subunit 4 family. In terms of assembly, part of the TFIIIC subcomplex TFIIIC2, consisting of six subunits, GTF3C1, GTF3C2, GTF3C3, GTF3C4, GTF3C5 and GTF3C6. Interacts with BRF1, GTF3C1, GTF3C2, GTF3C5, GTF3C6, POLR3C and POLR3F.

The protein localises to the nucleus. The enzyme catalyses L-lysyl-[protein] + acetyl-CoA = N(6)-acetyl-L-lysyl-[protein] + CoA + H(+). Essential for RNA polymerase III to make a number of small nuclear and cytoplasmic RNAs, including 5S RNA, tRNA, and adenovirus-associated (VA) RNA of both cellular and viral origin. Has histone acetyltransferase activity (HAT) with unique specificity for free and nucleosomal H3. May cooperate with GTF3C5 in facilitating the recruitment of TFIIIB and RNA polymerase through direct interactions with BRF1, POLR3C and POLR3F. May be localized close to the A box. The protein is General transcription factor 3C polypeptide 4 (GTF3C4) of Homo sapiens (Human).